Here is a 500-residue protein sequence, read N- to C-terminus: MPSLSSLCPDIVLIGAGIMSSTLAALLRELDPSLSMVMFETLSDCGQESSYAWNNAGTGHAGNCELNYTPQRADGSVDISKALAVNTEFDLSRQLWAHWVREGRIADPAAFVQPCPHISLVWGAENVAFLKARYEAMVAHHCFADMEYTDDPAVIAQWAPLAMAGRDTTQPVAATRIREGTDVNFGALTHALTASLKTDRSVSIHYNHRVTDLTRTEDGRWRVTATDTESGHAITVLTRFVFIGAGGNALPLLQKSGIPEATHYAGFPVSGLWLRCTDPAITRQHHAKVYGKAPVGSPPMSVPHLDTRVIDGKSCLLFGPYAGFSTKFLKSGSWTDYFRSLTPKNIIPALTAGKDNLGLLDYLVKQVIQTNEARFQALLDFYPTARPEDWSKVVAGQRVQIIRPDSGLHGKLRFGTELVKNADRSLVAVLGASPGASIAASVALQVVQGCFPERLVEGDWLPRLRQVFPAYGVDLTQDAAACATLRRDTAQVLGIASEAG.

Belongs to the MQO family. It depends on FAD as a cofactor.

It catalyses the reaction (S)-malate + a quinone = a quinol + oxaloacetate. The protein operates within carbohydrate metabolism; tricarboxylic acid cycle; oxaloacetate from (S)-malate (quinone route): step 1/1. The chain is Probable malate:quinone oxidoreductase from Gluconobacter oxydans (strain 621H) (Gluconobacter suboxydans).